The chain runs to 256 residues: Acetyl-coenzyme A carboxylase carboxyl transferase subunit alpha (256 aa).

The region spanning 1–236 is the CoA carboxyltransferase C-terminal domain; the sequence is MTDVARILKE…KLHLIDEITQ (236 aa).

Belongs to the AccA family. As to quaternary structure, acetyl-CoA carboxylase is a heterohexamer composed of biotin carboxyl carrier protein (AccB), biotin carboxylase (AccC) and two subunits each of ACCase subunit alpha (AccA) and ACCase subunit beta (AccD).

The protein localises to the cytoplasm. It carries out the reaction N(6)-carboxybiotinyl-L-lysyl-[protein] + acetyl-CoA = N(6)-biotinyl-L-lysyl-[protein] + malonyl-CoA. It functions in the pathway lipid metabolism; malonyl-CoA biosynthesis; malonyl-CoA from acetyl-CoA: step 1/1. In terms of biological role, component of the acetyl coenzyme A carboxylase (ACC) complex. First, biotin carboxylase catalyzes the carboxylation of biotin on its carrier protein (BCCP) and then the CO(2) group is transferred by the carboxyltransferase to acetyl-CoA to form malonyl-CoA. In Streptococcus equi subsp. zooepidemicus (strain H70), this protein is Acetyl-coenzyme A carboxylase carboxyl transferase subunit alpha.